A 436-amino-acid chain; its full sequence is UDP-N-acetylmuramate--L-alanine ligase (436 aa).

111–117 (GTHGKTS) contacts ATP.

The protein belongs to the MurCDEF family.

It is found in the cytoplasm. The catalysed reaction is UDP-N-acetyl-alpha-D-muramate + L-alanine + ATP = UDP-N-acetyl-alpha-D-muramoyl-L-alanine + ADP + phosphate + H(+). Its pathway is cell wall biogenesis; peptidoglycan biosynthesis. Its function is as follows. Cell wall formation. The sequence is that of UDP-N-acetylmuramate--L-alanine ligase from Pediococcus pentosaceus (strain ATCC 25745 / CCUG 21536 / LMG 10740 / 183-1w).